Reading from the N-terminus, the 245-residue chain is MHIDILTLFPEMFHGVFQSSILNKAVERQQFTYDLVNFREYSKNKHQKVDDYPYGGGAGMVLTPQPIFDAVEAVKSKRNSKPRVILMCPQGETLTQQKSEELAKEDHLIFICGHYEGYDERIREHIVTDEISIGDYVLTGGELGSMVVVDSVVRLLPDVLGNQQSAPQDSFSTGLLEHPHYTRPADFRGYKVPEVLLSGNHANIDSWRRKQSLIRTWNRRRDLLDKIELTDEEKITLNTDTPDEV.

Residues glycine 113 and 133-138 (IGDYVL) contribute to the S-adenosyl-L-methionine site.

Belongs to the RNA methyltransferase TrmD family. In terms of assembly, homodimer.

The protein localises to the cytoplasm. It catalyses the reaction guanosine(37) in tRNA + S-adenosyl-L-methionine = N(1)-methylguanosine(37) in tRNA + S-adenosyl-L-homocysteine + H(+). Specifically methylates guanosine-37 in various tRNAs. The polypeptide is tRNA (guanine-N(1)-)-methyltransferase (Oceanobacillus iheyensis (strain DSM 14371 / CIP 107618 / JCM 11309 / KCTC 3954 / HTE831)).